Reading from the N-terminus, the 322-residue chain is Aspartate carbamoyltransferase catalytic subunit (322 aa).

Carbamoyl phosphate contacts are provided by Arg-65 and Thr-66. Lys-93 serves as a coordination point for L-aspartate. Carbamoyl phosphate is bound by residues Arg-115, His-143, and Gln-146. Positions 176 and 230 each coordinate L-aspartate. Residues Gly-271 and Pro-272 each coordinate carbamoyl phosphate.

It belongs to the aspartate/ornithine carbamoyltransferase superfamily. ATCase family. Heterododecamer (2C3:3R2) of six catalytic PyrB chains organized as two trimers (C3), and six regulatory PyrI chains organized as three dimers (R2).

The enzyme catalyses carbamoyl phosphate + L-aspartate = N-carbamoyl-L-aspartate + phosphate + H(+). The protein operates within pyrimidine metabolism; UMP biosynthesis via de novo pathway; (S)-dihydroorotate from bicarbonate: step 2/3. In terms of biological role, catalyzes the condensation of carbamoyl phosphate and aspartate to form carbamoyl aspartate and inorganic phosphate, the committed step in the de novo pyrimidine nucleotide biosynthesis pathway. The sequence is that of Aspartate carbamoyltransferase catalytic subunit from Brucella abortus (strain S19).